The sequence spans 577 residues: Arginine--tRNA ligase (577 aa).

The 'HIGH' region motif lies at 122–132 (PNVAKEMHVGH).

This sequence belongs to the class-I aminoacyl-tRNA synthetase family. As to quaternary structure, monomer.

The protein resides in the cytoplasm. The catalysed reaction is tRNA(Arg) + L-arginine + ATP = L-arginyl-tRNA(Arg) + AMP + diphosphate. This is Arginine--tRNA ligase from Salmonella arizonae (strain ATCC BAA-731 / CDC346-86 / RSK2980).